Consider the following 97-residue polypeptide: uncharacterized protein (97 aa).

The Stress-response A/B barrel domain occupies 2-95; it reads IRHLVLFKLN…EFATWVIADY (94 aa).

This is an uncharacterized protein from Streptomyces coelicolor (strain ATCC BAA-471 / A3(2) / M145).